Consider the following 401-residue polypeptide: UPF0283 membrane protein SO_1811 (401 aa).

Residues methionine 1–serine 22 are disordered. 3 consecutive transmembrane segments (helical) span residues leucine 99–leucine 119, leucine 129–isoleucine 149, and glutamate 239–tryptophan 259.

Belongs to the UPF0283 family.

The protein resides in the cell inner membrane. This is UPF0283 membrane protein SO_1811 from Shewanella oneidensis (strain ATCC 700550 / JCM 31522 / CIP 106686 / LMG 19005 / NCIMB 14063 / MR-1).